Here is a 412-residue protein sequence, read N- to C-terminus: Heat stress transcription factor A-3 (412 aa).

Residues I53–S147 mediate DNA binding. A disordered region spans residues R144–G170. The segment covering P148–T166 has biased composition (low complexity). The segment at S159–F225 is hydrophobic repeat HR-A/B. Residues T166–L224 are a coiled coil. The Bipartite nuclear localization signal signature appears at K238–K254. The AHA1 motif lies at D277–D286. The short motif at D381 to G390 is the AHA2 element.

The protein belongs to the HSF family. Class A subfamily. Homotrimer. Exhibits temperature-dependent phosphorylation.

It is found in the nucleus. Its function is as follows. Transcriptional activator that specifically binds DNA sequence 5'-AGAAnnTTCT-3' known as heat shock promoter elements (HSE). Involved in heat stress response. Activated by DREB2A under heat stress. The sequence is that of Heat stress transcription factor A-3 (HSFA3) from Arabidopsis thaliana (Mouse-ear cress).